Here is a 72-residue protein sequence, read N- to C-terminus: Cytochrome b-c1 complex subunit 8-2, mitochondrial (72 aa).

Residues M1–N41 lie on the Mitochondrial matrix side of the membrane. Residues W42–Y58 form a helical membrane-spanning segment. The Mitochondrial intermembrane portion of the chain corresponds to A59 to F72.

It belongs to the UQCRQ/QCR8 family. Component of the ubiquinol-cytochrome c oxidoreductase (cytochrome b-c1 complex, complex III, CIII), a multisubunit enzyme composed of 10 subunits. The complex is composed of 3 respiratory subunits cytochrome b (MT-CYB), cytochrome c1 (CYC1-1 or CYC1-2) and Rieske protein (UCR1-1 or UCR1-2), 2 core protein subunits MPPalpha1 (or MPPalpha2) and MPPB, and 5 low-molecular weight protein subunits QCR7-1 (or QCR7-2), UCRQ-1 (or UCRQ-2), QCR9, UCRY and probably QCR6-1 (or QCR6-2). The complex exists as an obligatory dimer and forms supercomplexes (SCs) in the inner mitochondrial membrane with NADH-ubiquinone oxidoreductase (complex I, CI), resulting in different assemblies (supercomplexes SCI(1)III(2) and SCI(2)III(4)).

The protein localises to the mitochondrion inner membrane. Functionally, component of the ubiquinol-cytochrome c oxidoreductase, a multisubunit transmembrane complex that is part of the mitochondrial electron transport chain which drives oxidative phosphorylation. The respiratory chain contains 3 multisubunit complexes succinate dehydrogenase (complex II, CII), ubiquinol-cytochrome c oxidoreductase (cytochrome b-c1 complex, complex III, CIII) and cytochrome c oxidase (complex IV, CIV), that cooperate to transfer electrons derived from NADH and succinate to molecular oxygen, creating an electrochemical gradient over the inner membrane that drives transmembrane transport and the ATP synthase. The cytochrome b-c1 complex catalyzes electron transfer from ubiquinol to cytochrome c, linking this redox reaction to translocation of protons across the mitochondrial inner membrane, with protons being carried across the membrane as hydrogens on the quinol. In the process called Q cycle, 2 protons are consumed from the matrix, 4 protons are released into the intermembrane space and 2 electrons are passed to cytochrome c. This Arabidopsis thaliana (Mouse-ear cress) protein is Cytochrome b-c1 complex subunit 8-2, mitochondrial (UCRQ-2).